A 94-amino-acid polypeptide reads, in one-letter code: MASEKKDKLEPQIKSVDMSEDMQQEAVEVAIEAMEKYHIEKDIAQYIKREFDSRKGATWHCVVGRNFGSFVTHETKHFIYFYLGHCAILLFKTQ.

This sequence belongs to the dynein light chain family. As to quaternary structure, homodimer. Cytoplasmic dynein consists of two catalytic heavy chains (HCs) and a number of non-catalytic subunits which present intermediate chains (ICs), light intermediate chains (LICs) and light chains (LCs). Component of the nuclear pore complex (NPC). The nuclear pore complex constitutes the exclusive means of nucleocytoplasmic transport. NPCs allow the passive diffusion of ions and small molecules and the active, nuclear transport receptor-mediated bidirectional transport of macromolecules such as proteins, RNAs, ribonucleoparticles (RNPs), and ribosomal subunits across the nuclear envelope. Due to its 8-fold rotational symmetry, all subunits are present with 8 copies or multiples thereof.

It is found in the cytoplasm. It localises to the cytoskeleton. The protein resides in the nucleus. Its subcellular location is the nuclear pore complex. Its function is as follows. Acts as one of several non-catalytic accessory components of the cytoplasmic dynein complex that are thought to be involved in linking dynein to cargos and to adapter proteins that regulate dynein function. Cytoplasmic dynein 1 acts as a motor for the intracellular retrograde motility of vesicles and organelles along microtubules. May play a role in changing or maintaining the spatial distribution of cytoskeletal structures. Also a component of the nuclear pore complex. In Emericella nidulans (strain FGSC A4 / ATCC 38163 / CBS 112.46 / NRRL 194 / M139) (Aspergillus nidulans), this protein is Dynein light chain, cytoplasmic (nudG).